The following is a 101-amino-acid chain: RNA-binding protein Hfq (101 aa).

In terms of domain architecture, Sm spans 9-68 (DPYLNALRRERIPVSIYLVNGIKLQGQIESFDQFIILLKNTVSQMVYKHAISTVVPARSI). The tract at residues 68–91 (ISHNNNGSSQAQAPQQAVQTTQPV) is disordered. Positions 77-91 (QAQAPQQAVQTTQPV) are enriched in low complexity.

Belongs to the Hfq family. In terms of assembly, homohexamer.

Functionally, RNA chaperone that binds small regulatory RNA (sRNAs) and mRNAs to facilitate mRNA translational regulation in response to envelope stress, environmental stress and changes in metabolite concentrations. Also binds with high specificity to tRNAs. This chain is RNA-binding protein Hfq, found in Haemophilus ducreyi (strain 35000HP / ATCC 700724).